A 317-amino-acid polypeptide reads, in one-letter code: Probable cell division protein WhiA (317 aa).

A DNA-binding region (H-T-H motif) is located at residues 281–314 (SLKELGKMLEPPVGKSGVNHRLRKIEKIAEELRK).

Belongs to the WhiA family.

Involved in cell division and chromosome segregation. The protein is Probable cell division protein WhiA of Clostridium acetobutylicum (strain ATCC 824 / DSM 792 / JCM 1419 / IAM 19013 / LMG 5710 / NBRC 13948 / NRRL B-527 / VKM B-1787 / 2291 / W).